Reading from the N-terminus, the 320-residue chain is GRAM domain-containing protein 2A (320 aa).

Positions 33–56 (TEKPGKVQEPPDDGSLHWSEGSKG) are disordered. Residues 74–141 (QQYHKLFKDI…VSVQLIKKHK (68 aa)) enclose the GRAM domain. A helical transmembrane segment spans residues 278–298 (LLKVIFVMICFLVLSSSYLAF).

In terms of processing, phosphorylated.

It is found in the endoplasmic reticulum membrane. It localises to the cell membrane. In terms of biological role, participates in the organization ofendoplasmic reticulum-plasma membrane contact sites (EPCS) with pleiotropic functions including STIM1 recruitment and calcium homeostasis. Constitutive tether that co-localize with ESYT2/3 tethers at endoplasmic reticulum-plasma membrane contact sites in a phosphatidylinositol lipid-dependent manner. Pre-marks the subset of phosphtidylinositol 4,5-biphosphate (PI(4,5)P2)-enriched EPCS destined for the store operated calcium entry pathway (SOCE). This is GRAM domain-containing protein 2A from Mus musculus (Mouse).